We begin with the raw amino-acid sequence, 305 residues long: MIVQPSAVAKGWPIATTLLPASCGPADPKPEPKPKQRRLCRKVFPLRARCGALAHCPIPGKNEIFTNVNHSHISIPSPRLLLVEDDPRLREDLDAHFRRRGFRVTVCGDGSHGLEAAGREAFDLVLLDIMLPGLDGLALLESLRREQATPVMLMSALGAEQDRISGFTRGADDYLPKPFSLAELDARTDALLRRVRLDRLPLAQRRDTRLVFDDQAQDVLHQGLPAGLTPSEYRLLATLREHAGEALSKPFLYRSVLHRSYTRLDRGLDVHVCNLRRKLAVVAVRHLQIQAVRGQGYLLVETEHP.

The Response regulatory domain occupies Arg-79–Leu-192. Residue Asp-128 is modified to 4-aspartylphosphate. A DNA-binding region (ompR/PhoB-type) is located at residues Leu-200–Glu-301.

In terms of processing, phosphorylated by PfeS.

The protein resides in the cytoplasm. Functionally, member of the two-component regulatory system PfeR/PfeS. Activates expression of the ferric enterobactin receptor. The sequence is that of Transcriptional activator protein PfeR (pfeR) from Pseudomonas aeruginosa (strain ATCC 15692 / DSM 22644 / CIP 104116 / JCM 14847 / LMG 12228 / 1C / PRS 101 / PAO1).